The chain runs to 249 residues: 1-(5-phosphoribosyl)-5-[(5-phosphoribosylamino)methylideneamino] imidazole-4-carboxamide isomerase (249 aa).

Catalysis depends on aspartate 8, which acts as the Proton acceptor. The active-site Proton donor is aspartate 131.

It belongs to the HisA/HisF family.

It is found in the cytoplasm. The enzyme catalyses 1-(5-phospho-beta-D-ribosyl)-5-[(5-phospho-beta-D-ribosylamino)methylideneamino]imidazole-4-carboxamide = 5-[(5-phospho-1-deoxy-D-ribulos-1-ylimino)methylamino]-1-(5-phospho-beta-D-ribosyl)imidazole-4-carboxamide. It functions in the pathway amino-acid biosynthesis; L-histidine biosynthesis; L-histidine from 5-phospho-alpha-D-ribose 1-diphosphate: step 4/9. This chain is 1-(5-phosphoribosyl)-5-[(5-phosphoribosylamino)methylideneamino] imidazole-4-carboxamide isomerase, found in Aromatoleum aromaticum (strain DSM 19018 / LMG 30748 / EbN1) (Azoarcus sp. (strain EbN1)).